Here is a 476-residue protein sequence, read N- to C-terminus: Aspartyl/glutamyl-tRNA(Asn/Gln) amidotransferase subunit B (476 aa).

Belongs to the GatB/GatE family. GatB subfamily. Heterotrimer of A, B and C subunits.

The enzyme catalyses L-glutamyl-tRNA(Gln) + L-glutamine + ATP + H2O = L-glutaminyl-tRNA(Gln) + L-glutamate + ADP + phosphate + H(+). It catalyses the reaction L-aspartyl-tRNA(Asn) + L-glutamine + ATP + H2O = L-asparaginyl-tRNA(Asn) + L-glutamate + ADP + phosphate + 2 H(+). Functionally, allows the formation of correctly charged Asn-tRNA(Asn) or Gln-tRNA(Gln) through the transamidation of misacylated Asp-tRNA(Asn) or Glu-tRNA(Gln) in organisms which lack either or both of asparaginyl-tRNA or glutaminyl-tRNA synthetases. The reaction takes place in the presence of glutamine and ATP through an activated phospho-Asp-tRNA(Asn) or phospho-Glu-tRNA(Gln). The chain is Aspartyl/glutamyl-tRNA(Asn/Gln) amidotransferase subunit B from Oleidesulfovibrio alaskensis (strain ATCC BAA-1058 / DSM 17464 / G20) (Desulfovibrio alaskensis).